The chain runs to 238 residues: Orotidine 5'-phosphate decarboxylase (238 aa).

Substrate-binding positions include aspartate 18, lysine 40, 67–76 (DMKLLDIDNT), threonine 122, arginine 183, glutamine 192, and arginine 213. Lysine 69 (proton donor) is an active-site residue.

Belongs to the OMP decarboxylase family. Type 1 subfamily. As to quaternary structure, homodimer.

The catalysed reaction is orotidine 5'-phosphate + H(+) = UMP + CO2. It participates in pyrimidine metabolism; UMP biosynthesis via de novo pathway; UMP from orotate: step 2/2. In terms of biological role, catalyzes the decarboxylation of orotidine 5'-monophosphate (OMP) to uridine 5'-monophosphate (UMP). This chain is Orotidine 5'-phosphate decarboxylase, found in Brucella canis (strain ATCC 23365 / NCTC 10854 / RM-666).